The chain runs to 298 residues: Octopine catabolism/uptake operon regulatory protein OccR (298 aa).

In terms of domain architecture, HTH lysR-type spans 1-58 (MNLRQVEAFRAVMLTGQMTAAAELMLVTQPAISRLIKDFEQATKLQLFERRGNHIIPT). The H-T-H motif DNA-binding region spans 18–37 (MTAAAELMLVTQPAISRLIK).

This sequence belongs to the LysR transcriptional regulatory family.

Functionally, positive regulatory protein for the occ operon involved in octopine catabolism and uptake. Also acts as a negative regulator of its expression. The sequence is that of Octopine catabolism/uptake operon regulatory protein OccR (occR) from Agrobacterium tumefaciens (strain Ach5).